Reading from the N-terminus, the 349-residue chain is Small ribosomal subunit biogenesis GTPase RsgA (349 aa).

A disordered region spans residues 1–38 (MSKNKLSKGQERRVQANHQRRLKRTDNKPELDDSQLGE). Residues 102–272 (TSVLNRPDIY…VIDSPGVREF (171 aa)) form the CP-type G domain. GTP is bound by residues 158 to 161 (NKID) and 212 to 220 (GQSGVGKSS). 4 residues coordinate Zn(2+): cysteine 296, cysteine 301, histidine 303, and cysteine 309.

Belongs to the TRAFAC class YlqF/YawG GTPase family. RsgA subfamily. Monomer. Associates with 30S ribosomal subunit, binds 16S rRNA. It depends on Zn(2+) as a cofactor.

The protein resides in the cytoplasm. Its function is as follows. One of several proteins that assist in the late maturation steps of the functional core of the 30S ribosomal subunit. Helps release RbfA from mature subunits. May play a role in the assembly of ribosomal proteins into the subunit. Circularly permuted GTPase that catalyzes slow GTP hydrolysis, GTPase activity is stimulated by the 30S ribosomal subunit. The sequence is that of Small ribosomal subunit biogenesis GTPase RsgA from Serratia proteamaculans (strain 568).